The primary structure comprises 455 residues: Kynurenine 3-monooxygenase (455 aa).

Belongs to the aromatic-ring hydroxylase family. KMO subfamily. FAD serves as cofactor.

The catalysed reaction is L-kynurenine + NADPH + O2 + H(+) = 3-hydroxy-L-kynurenine + NADP(+) + H2O. It participates in cofactor biosynthesis; NAD(+) biosynthesis; quinolinate from L-kynurenine: step 1/3. Catalyzes the hydroxylation of L-kynurenine (L-Kyn) to form 3-hydroxy-L-kynurenine (L-3OHKyn). Required for synthesis of quinolinic acid. This is Kynurenine 3-monooxygenase from Xanthomonas euvesicatoria pv. vesicatoria (strain 85-10) (Xanthomonas campestris pv. vesicatoria).